A 383-amino-acid polypeptide reads, in one-letter code: F-box/kelch-repeat protein At1g16250 (383 aa).

One can recognise an F-box domain in the interval Ser-7–Arg-54. Kelch repeat units lie at residues Cys-50–Cys-103, Cys-109–Gly-165, Lys-166–Gly-214, Phe-216–Asn-263, and Glu-318–Leu-377.

In Arabidopsis thaliana (Mouse-ear cress), this protein is F-box/kelch-repeat protein At1g16250.